A 155-amino-acid chain; its full sequence is Ribosome maturation factor RimP (155 aa).

The protein belongs to the RimP family.

Its subcellular location is the cytoplasm. In terms of biological role, required for maturation of 30S ribosomal subunits. This Synechococcus sp. (strain RCC307) protein is Ribosome maturation factor RimP.